We begin with the raw amino-acid sequence, 288 residues long: Structure-specific endonuclease subunit SLX1 (288 aa).

The GIY-YIG domain occupies Pro-7–Thr-90.

The protein belongs to the SLX1 family. As to quaternary structure, forms a heterodimer with SLX4. It depends on a divalent metal cation as a cofactor.

The protein localises to the nucleus. Catalytic subunit of the SLX1-SLX4 structure-specific endonuclease that resolves DNA secondary structures generated during DNA repair and recombination. Has endonuclease activity towards branched DNA substrates, introducing single-strand cuts in duplex DNA close to junctions with ss-DNA. The polypeptide is Structure-specific endonuclease subunit SLX1 (Yarrowia lipolytica (strain CLIB 122 / E 150) (Yeast)).